Consider the following 482-residue polypeptide: tRNA sulfurtransferase (482 aa).

The region spanning 61 to 165 (EAIRDALTRI…QDRLLLIKSR (105 aa)) is the THUMP domain. ATP is bound by residues 183 to 184 (LI), lysine 265, glycine 287, and glutamine 296. A disulfide bridge links cysteine 344 with cysteine 456. The region spanning 404–482 (FVPTDVLLDI…GFSNVKVYRP (79 aa)) is the Rhodanese domain. Catalysis depends on cysteine 456, which acts as the Cysteine persulfide intermediate.

This sequence belongs to the ThiI family.

The protein resides in the cytoplasm. It catalyses the reaction [ThiI sulfur-carrier protein]-S-sulfanyl-L-cysteine + a uridine in tRNA + 2 reduced [2Fe-2S]-[ferredoxin] + ATP + H(+) = [ThiI sulfur-carrier protein]-L-cysteine + a 4-thiouridine in tRNA + 2 oxidized [2Fe-2S]-[ferredoxin] + AMP + diphosphate. The enzyme catalyses [ThiS sulfur-carrier protein]-C-terminal Gly-Gly-AMP + S-sulfanyl-L-cysteinyl-[cysteine desulfurase] + AH2 = [ThiS sulfur-carrier protein]-C-terminal-Gly-aminoethanethioate + L-cysteinyl-[cysteine desulfurase] + A + AMP + 2 H(+). It functions in the pathway cofactor biosynthesis; thiamine diphosphate biosynthesis. In terms of biological role, catalyzes the ATP-dependent transfer of a sulfur to tRNA to produce 4-thiouridine in position 8 of tRNAs, which functions as a near-UV photosensor. Also catalyzes the transfer of sulfur to the sulfur carrier protein ThiS, forming ThiS-thiocarboxylate. This is a step in the synthesis of thiazole, in the thiamine biosynthesis pathway. The sulfur is donated as persulfide by IscS. The protein is tRNA sulfurtransferase of Pectobacterium atrosepticum (strain SCRI 1043 / ATCC BAA-672) (Erwinia carotovora subsp. atroseptica).